A 475-amino-acid polypeptide reads, in one-letter code: UDP-N-acetylmuramate--L-alanine ligase (475 aa).

An ATP-binding site is contributed by 125–131; sequence GTHGKTS.

It belongs to the MurCDEF family.

The protein localises to the cytoplasm. The enzyme catalyses UDP-N-acetyl-alpha-D-muramate + L-alanine + ATP = UDP-N-acetyl-alpha-D-muramoyl-L-alanine + ADP + phosphate + H(+). It functions in the pathway cell wall biogenesis; peptidoglycan biosynthesis. Functionally, cell wall formation. In Mycolicibacterium gilvum (strain PYR-GCK) (Mycobacterium gilvum (strain PYR-GCK)), this protein is UDP-N-acetylmuramate--L-alanine ligase.